An 87-amino-acid polypeptide reads, in one-letter code: MRLSEAIKHLAVRAVDSESPVDILPAEVVSVSPVEIRLNENDKLIIPADLIIVPKRLRAGEEALNTGERVMIVSLKGGQSFFILDKI.

This sequence to B.subtilis XkdR.

This is an uncharacterized protein from Bacillus subtilis (strain 168).